Reading from the N-terminus, the 366-residue chain is Chitoporin (366 aa).

Residues 1–23 (MDKMFKRTVIGAAVALASTGLMA) form the signal peptide.

It belongs to the Gram-negative porin family.

It is found in the cell outer membrane. Functionally, involved in the uptake of chitosugars. The sequence is that of Chitoporin (chiP) from Vibrio furnissii.